Here is a 121-residue protein sequence, read N- to C-terminus: Large ribosomal subunit protein bL20 (121 aa).

The protein belongs to the bacterial ribosomal protein bL20 family.

Binds directly to 23S ribosomal RNA and is necessary for the in vitro assembly process of the 50S ribosomal subunit. It is not involved in the protein synthesizing functions of that subunit. This chain is Large ribosomal subunit protein bL20, found in Sphingopyxis alaskensis (strain DSM 13593 / LMG 18877 / RB2256) (Sphingomonas alaskensis).